We begin with the raw amino-acid sequence, 211 residues long: Thymidylate kinase (211 aa).

An ATP-binding site is contributed by G7 to S14.

Belongs to the thymidylate kinase family.

It catalyses the reaction dTMP + ATP = dTDP + ADP. Phosphorylation of dTMP to form dTDP in both de novo and salvage pathways of dTTP synthesis. In Chlamydia abortus (strain DSM 27085 / S26/3) (Chlamydophila abortus), this protein is Thymidylate kinase.